A 308-amino-acid polypeptide reads, in one-letter code: Probable inositol oxygenase (308 aa).

Residues Arg-49 and 106–108 (DDS) each bind substrate. Residues His-119, His-144, and Asp-145 each contribute to the Fe cation site. Substrate contacts are provided by residues Lys-148 and 165–166 (GD). Fe cation is bound by residues His-217, His-243, and Asp-276. 243–244 (HS) contributes to the substrate binding site.

This sequence belongs to the myo-inositol oxygenase family. Fe cation is required as a cofactor.

The protein resides in the cytoplasm. The catalysed reaction is myo-inositol + O2 = D-glucuronate + H2O + H(+). The protein operates within polyol metabolism; myo-inositol degradation into D-glucuronate; D-glucuronate from myo-inositol: step 1/1. Involved in the biosynthesis of UDP-glucuronic acid (UDP-GlcA), providing nucleotide sugars for cell-wall polymers. May be also involved in plant ascorbate biosynthesis. The sequence is that of Probable inositol oxygenase from Oryza sativa subsp. japonica (Rice).